An 87-amino-acid polypeptide reads, in one-letter code: Phosphocarrier protein HPr (87 aa).

The region spanning 1-87 is the HPr domain; it reads MASKDFHIVA…AETMTKEGLA (87 aa). Histidine 15 acts as the Pros-phosphohistidine intermediate in catalysis. Residue serine 46 is modified to Phosphoserine; by HPrK/P.

The protein belongs to the HPr family.

The protein localises to the cytoplasm. Phosphorylation on Ser-46 inhibits the phosphoryl transfer from enzyme I to HPr. In terms of biological role, general (non sugar-specific) component of the phosphoenolpyruvate-dependent sugar phosphotransferase system (sugar PTS). This major carbohydrate active-transport system catalyzes the phosphorylation of incoming sugar substrates concomitantly with their translocation across the cell membrane. The phosphoryl group from phosphoenolpyruvate (PEP) is transferred to the phosphoryl carrier protein HPr by enzyme I. Phospho-HPr then transfers it to the PTS EIIA domain. Functionally, P-Ser-HPr interacts with the catabolite control protein A (CcpA), forming a complex that binds to DNA at the catabolite response elements cre, operator sites preceding a large number of catabolite-regulated genes. Thus, P-Ser-HPr is a corepressor in carbon catabolite repression (CCR), a mechanism that allows bacteria to coordinate and optimize the utilization of available carbon sources. P-Ser-HPr also plays a role in inducer exclusion, in which it probably interacts with several non-PTS permeases and inhibits their transport activity. The protein is Phosphocarrier protein HPr (ptsH) of Streptococcus salivarius.